Here is a 545-residue protein sequence, read N- to C-terminus: CTP synthase (545 aa).

The tract at residues Met-1–Leu-266 is amidoligase domain. Ser-14 provides a ligand contact to CTP. Ser-14 contacts UTP. Residues Ser-15–Ile-20 and Asp-72 contribute to the ATP site. Positions 72 and 140 each coordinate Mg(2+). CTP is bound by residues Asp-147 to Glu-149, Lys-187 to Gln-192, and Lys-223. Residues Lys-187–Gln-192 and Lys-223 contribute to the UTP site. Lys-239–Val-241 is a binding site for ATP. In terms of domain architecture, Glutamine amidotransferase type-1 spans Thr-291–Arg-542. An L-glutamine-binding site is contributed by Gly-352. Cys-379 (nucleophile; for glutamine hydrolysis) is an active-site residue. Residues Leu-380–Gln-383, Glu-403, and Arg-470 contribute to the L-glutamine site. Residues His-515 and Glu-517 contribute to the active site.

This sequence belongs to the CTP synthase family. As to quaternary structure, homotetramer.

It carries out the reaction UTP + L-glutamine + ATP + H2O = CTP + L-glutamate + ADP + phosphate + 2 H(+). The catalysed reaction is L-glutamine + H2O = L-glutamate + NH4(+). The enzyme catalyses UTP + NH4(+) + ATP = CTP + ADP + phosphate + 2 H(+). Its pathway is pyrimidine metabolism; CTP biosynthesis via de novo pathway; CTP from UDP: step 2/2. Its activity is regulated as follows. Allosterically activated by GTP, when glutamine is the substrate; GTP has no effect on the reaction when ammonia is the substrate. The allosteric effector GTP functions by stabilizing the protein conformation that binds the tetrahedral intermediate(s) formed during glutamine hydrolysis. Inhibited by the product CTP, via allosteric rather than competitive inhibition. Catalyzes the ATP-dependent amination of UTP to CTP with either L-glutamine or ammonia as the source of nitrogen. Regulates intracellular CTP levels through interactions with the four ribonucleotide triphosphates. In Enterobacter sp. (strain 638), this protein is CTP synthase.